The following is a 244-amino-acid chain: 1-(5-phosphoribosyl)-5-[(5-phosphoribosylamino)methylideneamino] imidazole-4-carboxamide isomerase (244 aa).

Asp8 (proton acceptor) is an active-site residue. The active-site Proton donor is Asp130.

This sequence belongs to the HisA/HisF family.

Its subcellular location is the cytoplasm. The enzyme catalyses 1-(5-phospho-beta-D-ribosyl)-5-[(5-phospho-beta-D-ribosylamino)methylideneamino]imidazole-4-carboxamide = 5-[(5-phospho-1-deoxy-D-ribulos-1-ylimino)methylamino]-1-(5-phospho-beta-D-ribosyl)imidazole-4-carboxamide. Its pathway is amino-acid biosynthesis; L-histidine biosynthesis; L-histidine from 5-phospho-alpha-D-ribose 1-diphosphate: step 4/9. This chain is 1-(5-phosphoribosyl)-5-[(5-phosphoribosylamino)methylideneamino] imidazole-4-carboxamide isomerase, found in Syntrophomonas wolfei subsp. wolfei (strain DSM 2245B / Goettingen).